Reading from the N-terminus, the 144-residue chain is MRFTPAIVIAAFCSLAVAAPAAKAIARSPSEAVEDYVIPIDKKRGEAVEDYVIPIDKKRGEAVEDYVIPFDKRGEAVEDYVIPIDKKRGEAVEDYVIPFDKRGEAVEDYVIPIDKKRGEAVEDYVIPFDKRGEAVEDYVIPIDK.

The N-terminal stretch at 1–18 (MRFTPAIVIAAFCSLAVA) is a signal peptide. 9 consecutive propeptides follow at residues 19-35 (APAA…AVED), 42-50 (KKRGEAVED), 57-65 (KKRGEAVED), 72-79 (KRGEAVED), 86-94 (KKRGEAVED), 101-108 (KRGEAVED), 115-123 (KKRGEAVED), 130-137 (KRGEAVED), and K144.

PhomA' is processed by several endopeptidases including kexin proteases as well as the cluster-specific S41 family peptidase phomP1' and the peptidase phomG' to produce 5 identical copies of the hexapeptide Tyr-Val-Ile-Pro-Ile-Asp and 3 identical copies of Tyr-Val-Ile-Pro-Phe-Asp, that are further modified into phomapsins A and P, respectively. The timing and order of proteolysis of the phomA' precursor and PTMs are still unknown. Two tyrosinase-like enzyme phomQ1' and PhomQ2, catalyze the chlorination and hydroxylation of Tyr, respectively. PhomYb', is proposed to be involved in the construction of the macrocyclic structure. The other four ustYa family proteins may be involved in PTMs that generate the unique structure of phomopsin A. PhomYa' is required for the hydroxylation of C-beta of Tyr. PhomYc', PhomYd', and PhomYe' are responsible for the biosynthesis of 2,3-dehydroisoleucine (dIle), 2,3-dehydroaspartic acid (dAsp), and 3,4-dehydroproline (dPro), respectively. While dIle formation by phomYc is indispensable for the installation of dAsp by phomYd, the order of the other PTMs have not been elucidated yet. Most of the biosynthetic enzymes likely have broad substrate specificity, and thus, there might be a metabolic grid from a precursor to phomopsin A. The enzyme(s) responsible for the biosynthesis of 3,4-dehydrovaline (dVal) have also not been identified yet. Finally, PhomM' acts as an S-adenosylmethionine-dependent alpha-N-methyltransferase that catalyzes two successive N-methylation reactions, converting N-desmethyl-phomopsin A to phomopsin A and phomopsin A further to an N,N-dimethylated congener called phomopsin E.

The protein operates within mycotoxin biosynthesis. In terms of biological role, ribosomally synthesized cyclic peptide phomopsin precursor; part of the gene cluster that mediates the biosynthesis of the phomopsins, a group of hexapeptide mycotoxins which infects lupins and causes lupinosis disease in livestock. The phomA' translated product contains a 5-fold repeated peptide embedding the hexapeptide Tyr-Val-Ile-Pro-Ile-Asp and a 3-fold repeated peptide embedding the hexapeptide Tyr-Val-Ile-Pro-Phe-Asp, that is converted into phomapsin A and phomapsin P, respectively. After being excised from the precursor peptide by kexin proteases, the core peptides are cyclized and modified post-translationally by enzymes encoded within the corresponding gene cluster. This is Ribosomally synthesized cyclic peptide phomopsin precursor phomA' from Diaporthe leptostromiformis (Lupinosis disease fungus).